The sequence spans 509 residues: Lysine--tRNA ligase (509 aa).

Mg(2+)-binding residues include E418 and E425.

It belongs to the class-II aminoacyl-tRNA synthetase family. As to quaternary structure, homodimer. The cofactor is Mg(2+).

The protein resides in the cytoplasm. It carries out the reaction tRNA(Lys) + L-lysine + ATP = L-lysyl-tRNA(Lys) + AMP + diphosphate. In Acinetobacter baylyi (strain ATCC 33305 / BD413 / ADP1), this protein is Lysine--tRNA ligase (lysS).